Reading from the N-terminus, the 157-residue chain is DNA gyrase inhibitor (157 aa).

It belongs to the DNA gyrase inhibitor family. In terms of assembly, interacts with DNA gyrase.

It is found in the cytoplasm. Its function is as follows. Inhibits the supercoiling activity of DNA gyrase. Acts by inhibiting DNA gyrase at an early step, prior to (or at the step of) binding of DNA by the gyrase. It protects cells against toxins that target DNA gyrase, by inhibiting activity of these toxins and reducing the formation of lethal double-strand breaks in the cell. The sequence is that of DNA gyrase inhibitor from Enterobacter lignolyticus (strain SCF1).